The sequence spans 442 residues: Dol-P-Man:Man(5)GlcNAc(2)-PP-Dol alpha-1,3-mannosyltransferase (442 aa).

The Lumenal portion of the chain corresponds to 1-34; that stretch reads MAAPSSRPESNPPLYKQALDFALDVANGRHALSK. The helical transmembrane segment at 35-55 threads the bilayer; sequence LIPPALFLVDALLCGLIIWKV. Residues 56-84 lie on the Cytoplasmic side of the membrane; it reads PYTEIDWAAYMEQVSQILSGERDYTKVRG. A helical membrane pass occupies residues 85–105; that stretch reads GTGPLVYPAAHVYIYTGLYHL. Residues 106–111 lie on the Lumenal side of the membrane; sequence TDEGRN. A helical membrane pass occupies residues 112-132; the sequence is ILLAQQLFAGLYMVTLAVVMG. The Cytoplasmic segment spans residues 133-155; that stretch reads CYWQAKAPPYLFPLLTLSKRLHS. The chain crosses the membrane as a helical span at residues 156–176; the sequence is IFVLRCFNDCFAVLFLWLAIF. Residues 177–198 lie on the Lumenal side of the membrane; sequence FFQRRNWQAGALLYTLGLGVKM. Residues 199 to 219 form a helical membrane-spanning segment; sequence TLLLSLPAVGIVLFLGSGSFV. A topological domain (cytoplasmic) is located at residue Thr-220. A helical transmembrane segment spans residues 221 to 241; that stretch reads TLQLVATMGLVQILIGVPFLA. The Lumenal portion of the chain corresponds to 242 to 272; the sequence is HYPTEYLSRAFELSRQFFFKWTVNWRFVGEE. A helical transmembrane segment spans residues 273–293; sequence IFLSKGFALTLLALHVLVLGI. Residues 294–333 are Cytoplasmic-facing; it reads FITTRWIKPARKSLVQLISPVLLAGKPPLTVPEHRAAARD. The helical transmembrane segment at 334 to 354 threads the bilayer; the sequence is VTPRYIMTTILSANAVGLLFA. Topologically, residues 355-376 are lumenal; it reads RSLHYQFYAYVAWSTPFLLWRA. The helical transmembrane segment at 377-397 threads the bilayer; that stretch reads GLHPVLVYLLWAVHEWAWNVF. The Cytoplasmic portion of the chain corresponds to 398-401; that stretch reads PSTP. Residues 402-422 traverse the membrane as a helical segment; the sequence is ASSAVVVGVLGVTVAGVWFGA. Residues 423-442 lie on the Lumenal side of the membrane; that stretch reads REEWEPGMKSSSKKEEAAMR.

Belongs to the glycosyltransferase ALG3 family.

It localises to the endoplasmic reticulum membrane. It catalyses the reaction an alpha-D-Man-(1-&gt;2)-alpha-D-Man-(1-&gt;2)-alpha-D-Man-(1-&gt;3)-[alpha-D-Man-(1-&gt;6)]-beta-D-Man-(1-&gt;4)-beta-D-GlcNAc-(1-&gt;4)-alpha-D-GlcNAc-diphospho-di-trans,poly-cis-dolichol + a di-trans,poly-cis-dolichyl beta-D-mannosyl phosphate = an alpha-D-Man-(1-&gt;2)-alpha-D-Man-(1-&gt;2)-alpha-D-Man-(1-&gt;3)-[alpha-D-Man-(1-&gt;3)-alpha-D-Man-(1-&gt;6)]-beta-D-Man-(1-&gt;4)-beta-D-GlcNAc-(1-&gt;4)-alpha-D-GlcNAc-diphospho-di-trans,poly-cis-dolichol + a di-trans,poly-cis-dolichyl phosphate + H(+). The protein operates within protein modification; protein glycosylation. Its function is as follows. Dol-P-Man:Man(5)GlcNAc(2)-PP-Dol alpha-1,3-mannosyltransferase that operates in the biosynthetic pathway of dolichol-linked oligosaccharides, the glycan precursors employed in protein asparagine (N)-glycosylation. The assembly of dolichol-linked oligosaccharides begins on the cytosolic side of the endoplasmic reticulum membrane and finishes in its lumen. The sequential addition of sugars to dolichol pyrophosphate produces dolichol-linked oligosaccharides containing fourteen sugars, including two GlcNAcs, nine mannoses and three glucoses. Once assembled, the oligosaccharide is transferred from the lipid to nascent proteins by oligosaccharyltransferases. In the lumen of the endoplasmic reticulum, adds the first dolichyl beta-D-mannosyl phosphate derived mannose in an alpha-1,3 linkage to Man(5)GlcNAc(2)-PP-dolichol to produce Man(6)GlcNAc(2)-PP-dolichol. The chain is Dol-P-Man:Man(5)GlcNAc(2)-PP-Dol alpha-1,3-mannosyltransferase (alg-3) from Neurospora crassa (strain ATCC 24698 / 74-OR23-1A / CBS 708.71 / DSM 1257 / FGSC 987).